The primary structure comprises 177 residues: tRNA (cytidine(56)-2'-O)-methyltransferase (177 aa).

S-adenosyl-L-methionine contacts are provided by residues leucine 84 and 109–113; that span reads GAEKV.

It belongs to the aTrm56 family. Homodimer.

The protein localises to the cytoplasm. The enzyme catalyses cytidine(56) in tRNA + S-adenosyl-L-methionine = 2'-O-methylcytidine(56) in tRNA + S-adenosyl-L-homocysteine + H(+). Specifically catalyzes the AdoMet-dependent 2'-O-ribose methylation of cytidine at position 56 in tRNAs. In Methanosarcina mazei (strain ATCC BAA-159 / DSM 3647 / Goe1 / Go1 / JCM 11833 / OCM 88) (Methanosarcina frisia), this protein is tRNA (cytidine(56)-2'-O)-methyltransferase.